We begin with the raw amino-acid sequence, 78 residues long: Putative membrane protein insertion efficiency factor (78 aa).

It belongs to the UPF0161 family.

The protein localises to the cell inner membrane. In terms of biological role, could be involved in insertion of integral membrane proteins into the membrane. In Thiobacillus denitrificans (strain ATCC 25259 / T1), this protein is Putative membrane protein insertion efficiency factor.